Consider the following 234-residue polypeptide: UPF0502 protein Bphy_5360 (234 aa).

The protein belongs to the UPF0502 family.

The chain is UPF0502 protein Bphy_5360 from Paraburkholderia phymatum (strain DSM 17167 / CIP 108236 / LMG 21445 / STM815) (Burkholderia phymatum).